The primary structure comprises 390 residues: Protein snail (390 aa).

The SNAG domain stretch occupies residues 1–20 (MAANYKSCPLKKRPIVFVEE). 2 disordered regions span residues 29 to 65 (ALTK…PKRD) and 162 to 191 (QSVY…DLSV). Composition is skewed to polar residues over residues 32 to 43 (KDSQFAQDQPQD) and 162 to 172 (QSVYSYQQMTP). 5 C2H2-type zinc fingers span residues 245-267 (FKCD…RQFH), 280-302 (HSCE…IRTH), 306-328 (CKCP…IRTH), 334-356 (FQCP…QQTH), and 362-385 (YACQ…SSNC).

The protein belongs to the snail C2H2-type zinc-finger protein family.

It is found in the nucleus. Its function is as follows. Essential for the correct specification of ventral-dorsal patterns. This is Protein snail (sna) from Drosophila melanogaster (Fruit fly).